A 323-amino-acid polypeptide reads, in one-letter code: Nucleotide-binding protein ZMO1325 (323 aa).

ATP is bound at residue 25–32 (GLSGAGKS). A GTP-binding site is contributed by 78-81 (DSRT).

The protein belongs to the RapZ-like family.

Its function is as follows. Displays ATPase and GTPase activities. The protein is Nucleotide-binding protein ZMO1325 of Zymomonas mobilis subsp. mobilis (strain ATCC 31821 / ZM4 / CP4).